Consider the following 487-residue polypeptide: Serine/threonine-protein kinase 4 (487 aa).

Residue M1 is modified to N-acetylmethionine. T3 bears the Phosphothreonine mark. The 252-residue stretch at 30-281 (FDVLEKLGEG…ATQLLQHPFV (252 aa)) folds into the Protein kinase domain. ATP contacts are provided by residues 36–44 (LGEGSYGSV) and K59. The active-site Proton acceptor is D149. A Phosphothreonine; by autocatalysis modification is found at T183. S265 carries the post-translational modification Phosphoserine. The stretch at 290–310 (LRDLINEAMDVKLKRQESQQR) forms a coiled coil. Residues 303–312 (KRQESQQREV) are compositionally biased toward basic and acidic residues. Positions 303-332 (KRQESQQREVDQDDEENSEEDEMDSGTMVR) are disordered. The segment covering 313-326 (DQDDEENSEEDEMD) has biased composition (acidic residues). S320 is modified (phosphoserine). Residues T340 and T367 each carry the phosphothreonine modification. T387 carries the phosphothreonine; by PKB/AKT1 modification. S410 and S414 each carry phosphoserine. Position 433 is a phosphotyrosine (Y433). Positions 433–480 (YEFLKSWTVEDLQKRLLALDPMMEQEIEEIRQKYQSKRQPILDAIEAK) constitute an SARAH domain.

This sequence belongs to the protein kinase superfamily. STE Ser/Thr protein kinase family. STE20 subfamily. In terms of assembly, homodimer; mediated via the coiled-coil region. Interacts with NORE1, which inhibits autoactivation. Interacts with and stabilizes SAV1. Interacts with RASSF1. Interacts with FOXO3. Interacts with RASSF2 (via SARAH domain). Interacts with AR, PKB/AKT1, TNNI3 and SIRT1. Interacts with DLG5 (via PDZ domain 3). Interacts with MARK3 and SCRIB in the presence of DLG5. Mg(2+) serves as cofactor. In terms of processing, autophosphorylated on serine and threonine residues. Phosphorylation at Thr-387 by PKB/AKT1, leads to inhibition of its: kinase activity, nuclear translocation and autophosphorylation at Thr-183. It also diminishes its cleavage by caspases and its ability to phosphorylate FOXO3. Post-translationally, proteolytically cleaved by caspase-3 during apoptosis at Asp-326 and Asp-349 resulting in a 37 kDa or a 39 kDa subunit respectively. The 39 kDa subunit is further cleaved into the 37 kDa form. Proteolytic cleavage results in kinase activation and nuclear translocation of the truncated form (MST1/N). It is less likely that cleavage at Asp-349 is a prerequisite for activation as this site is not conserved in the murine ortholog.

Its subcellular location is the cytoplasm. The protein localises to the nucleus. It carries out the reaction L-seryl-[protein] + ATP = O-phospho-L-seryl-[protein] + ADP + H(+). It catalyses the reaction L-threonyl-[protein] + ATP = O-phospho-L-threonyl-[protein] + ADP + H(+). Its activity is regulated as follows. Inhibited by the C-terminal non-catalytic region. Activated by caspase-cleavage. Full activation also requires homodimerization and autophosphorylation of Thr-183. Activated by RASSF1 which acts by preventing its dephosphorylation. Its function is as follows. Stress-activated, pro-apoptotic kinase which, following caspase-cleavage, enters the nucleus and induces chromatin condensation followed by internucleosomal DNA fragmentation. Key component of the Hippo signaling pathway which plays a pivotal role in organ size control and tumor suppression by restricting proliferation and promoting apoptosis. The core of this pathway is composed of a kinase cascade wherein STK3/MST2 and STK4/MST1, in complex with its regulatory protein SAV1, phosphorylates and activates LATS1/2 in complex with its regulatory protein MOB1, which in turn phosphorylates and inactivates YAP1 oncoprotein and WWTR1/TAZ. Phosphorylation of YAP1 by LATS2 inhibits its translocation into the nucleus to regulate cellular genes important for cell proliferation, cell death, and cell migration. STK3/MST2 and STK4/MST1 are required to repress proliferation of mature hepatocytes, to prevent activation of facultative adult liver stem cells (oval cells), and to inhibit tumor formation. Phosphorylates 'Ser-14' of histone H2B (H2BS14ph) during apoptosis. Phosphorylates FOXO3 upon oxidative stress, which results in its nuclear translocation and cell death initiation. Phosphorylates MOBKL1A, MOBKL1B and RASSF2. Phosphorylates TNNI3 (cardiac Tn-I) and alters its binding affinity to TNNC1 (cardiac Tn-C) and TNNT2 (cardiac Tn-T). Phosphorylates FOXO1 on 'Ser-212' and regulates its activation and stimulates transcription of PMAIP1 in a FOXO1-dependent manner. Phosphorylates SIRT1 and inhibits SIRT1-mediated p53/TP53 deacetylation, thereby promoting p53/TP53 dependent transcription and apoptosis upon DNA damage. Acts as an inhibitor of PKB/AKT1. Phosphorylates AR on 'Ser-650' and suppresses its activity by intersecting with PKB/AKT1 signaling and antagonizing formation of AR-chromatin complexes. This is Serine/threonine-protein kinase 4 (STK4) from Colobus guereza (Mantled guereza).